Consider the following 875-residue polypeptide: E3 SUMO-protein ligase SIZ1 (875 aa).

In terms of domain architecture, SAP spans 12 to 46 (LAYFRIKELKDILNQLGLPKQGKKQDLIDRVLALL). The segment at 114-169 (KVRCICSSTMVNDSMIQCEDQRCQVWQHLNCVLIPDKPGESAEVPPVFYCELCRLS) adopts a PHD-type zinc-finger fold. An SP-RING-type zinc finger spans residues 349 to 430 (SDLEVVAESV…FNRITSLLRN (82 aa)). Positions 380, 382, 403, and 406 each coordinate Zn(2+). Residues 796-820 (GGGGNEEPAPADVNSQPQIPSTETG) form a disordered region. Positions 808-819 (VNSQPQIPSTET) are enriched in polar residues.

This sequence belongs to the PIAS family.

It is found in the nucleus. It functions in the pathway protein modification; protein sumoylation. Its function is as follows. Probable SUMO E3 ligase that may regulate Pi starvation responses. The chain is E3 SUMO-protein ligase SIZ1 (SIZ1) from Oryza sativa subsp. japonica (Rice).